The primary structure comprises 299 residues: Pyridoxal 5'-phosphate synthase subunit PdxS (299 aa).

D24 is a binding site for D-ribose 5-phosphate. Catalysis depends on K81, which acts as the Schiff-base intermediate with D-ribose 5-phosphate. G153 is a D-ribose 5-phosphate binding site. R165 is a D-glyceraldehyde 3-phosphate binding site. D-ribose 5-phosphate contacts are provided by residues G219 and 240 to 241; that span reads GS.

This sequence belongs to the PdxS/SNZ family. As to quaternary structure, in the presence of PdxT, forms a dodecamer of heterodimers.

It carries out the reaction aldehydo-D-ribose 5-phosphate + D-glyceraldehyde 3-phosphate + L-glutamine = pyridoxal 5'-phosphate + L-glutamate + phosphate + 3 H2O + H(+). It participates in cofactor biosynthesis; pyridoxal 5'-phosphate biosynthesis. Functionally, catalyzes the formation of pyridoxal 5'-phosphate from ribose 5-phosphate (RBP), glyceraldehyde 3-phosphate (G3P) and ammonia. The ammonia is provided by the PdxT subunit. Can also use ribulose 5-phosphate and dihydroxyacetone phosphate as substrates, resulting from enzyme-catalyzed isomerization of RBP and G3P, respectively. The polypeptide is Pyridoxal 5'-phosphate synthase subunit PdxS (Methanococcus maripaludis (strain DSM 14266 / JCM 13030 / NBRC 101832 / S2 / LL)).